Reading from the N-terminus, the 112-residue chain is SRA stem-loop-interacting RNA-binding protein, mitochondrial (112 aa).

At Ser15 the chain carries Phosphoserine. One can recognise an RRM domain in the interval 19 to 98; sequence PIAFVRKIPW…IHVQAQRAKA (80 aa). A Phosphothreonine modification is found at Thr104. The residue at position 105 (Ser105) is a Phosphoserine.

It is found in the mitochondrion. The protein resides in the nucleus. Functionally, RNA-binding protein that acts as a nuclear receptor corepressor. Probably acts by binding the SRA RNA, and repressing the SRA-mediated nuclear receptor coactivation. Binds the STR7 loop of SRA RNA. Also able to repress glucocorticoid (GR), androgen (AR), thyroid (TR) and VDR-mediated transactivation. This Mus musculus (Mouse) protein is SRA stem-loop-interacting RNA-binding protein, mitochondrial (Slirp).